The primary structure comprises 216 residues: NADH dehydrogenase [ubiquinone] iron-sulfur protein 7, mitochondrial (216 aa).

Residues 1–37 (MAALAALRLLHPILAVRSGVGAALQVRGVHSSMAADS) constitute a mitochondrion transit peptide. Cys-91 and Cys-92 together coordinate [4Fe-4S] cluster. The residue at position 114 (Arg-114) is a Hydroxyarginine. Cys-156 and Cys-186 together coordinate [4Fe-4S] cluster.

Belongs to the complex I 20 kDa subunit family. Core subunit of respiratory chain NADH dehydrogenase (Complex I) which is composed of 45 different subunits. This is a component of the iron-sulfur (IP) fragment of the enzyme. It depends on [4Fe-4S] cluster as a cofactor. In terms of processing, hydroxylated ar Arg-114 by NDUFAF5 early in the pathway of assembly of complex I, before the formation of the juncture between peripheral and membrane arms.

It is found in the mitochondrion inner membrane. It catalyses the reaction a ubiquinone + NADH + 5 H(+)(in) = a ubiquinol + NAD(+) + 4 H(+)(out). Functionally, core subunit of the mitochondrial membrane respiratory chain NADH dehydrogenase (Complex I) which catalyzes electron transfer from NADH through the respiratory chain, using ubiquinone as an electron acceptor. Essential for the catalytic activity of complex I. This chain is NADH dehydrogenase [ubiquinone] iron-sulfur protein 7, mitochondrial (NDUFS7), found in Bos taurus (Bovine).